We begin with the raw amino-acid sequence, 187 residues long: MPTQRKIETVADLKQRLERMQVAVVADYRGLSVADMTDLRKKLRESGAEFVVAKNTLTRIAARETGHEAIEPLLEGPTALAFAYDDVPKFVRAINEFNRGPKKITVRGGLLGTTLLKENVLDVVATLPTKDEVRAQVLGGLAAPVTGLAGIIAAPVNDIVNLLDATSKSILYALQARVDQLQPSSTS.

Belongs to the universal ribosomal protein uL10 family. As to quaternary structure, part of the ribosomal stalk of the 50S ribosomal subunit. The N-terminus interacts with L11 and the large rRNA to form the base of the stalk. The C-terminus forms an elongated spine to which L12 dimers bind in a sequential fashion forming a multimeric L10(L12)X complex.

Its function is as follows. Forms part of the ribosomal stalk, playing a central role in the interaction of the ribosome with GTP-bound translation factors. This Roseiflexus castenholzii (strain DSM 13941 / HLO8) protein is Large ribosomal subunit protein uL10.